The primary structure comprises 426 residues: Enolase (426 aa).

Gln163 provides a ligand contact to (2R)-2-phosphoglycerate. The Proton donor role is filled by Glu205. Residues Asp242, Glu286, and Asp313 each coordinate Mg(2+). Residues Lys338, Arg367, Ser368, and Lys389 each contribute to the (2R)-2-phosphoglycerate site. The active-site Proton acceptor is Lys338.

The protein belongs to the enolase family. It depends on Mg(2+) as a cofactor.

Its subcellular location is the cytoplasm. The protein localises to the secreted. It is found in the cell surface. The enzyme catalyses (2R)-2-phosphoglycerate = phosphoenolpyruvate + H2O. The protein operates within carbohydrate degradation; glycolysis; pyruvate from D-glyceraldehyde 3-phosphate: step 4/5. Functionally, catalyzes the reversible conversion of 2-phosphoglycerate (2-PG) into phosphoenolpyruvate (PEP). It is essential for the degradation of carbohydrates via glycolysis. In Helicobacter pylori (strain HPAG1), this protein is Enolase.